We begin with the raw amino-acid sequence, 530 residues long: Chaperone Ric-8A (530 aa).

A Phosphoserine modification is found at serine 435. 2 positions are modified to phosphothreonine: threonine 440 and threonine 442. Serine 501, serine 522, serine 523, and serine 527 each carry phosphoserine.

Belongs to the synembryn family. In terms of assembly, interacts with GDP-bound G alpha proteins GNAI1, GNAO1 and GNAQ, and with GNA13 with lower affinity. Does not interact with G-alpha proteins when they are in complex with subunits beta and gamma. Interacts (via C-terminus) with RGS14; the interaction stimulates the dissociation of the complex between RGS14 and the active GTP-bound form of GNAI1. Interacts with NCS1; interaction is favored in the absence of Ca(2+) and myristoylation of NCS1 is not required. In terms of processing, phosphorylated at Ser-435 and Thr-440 by CK2, stabilizing its interface with G alpha proteins.

It is found in the cytoplasm. It localises to the cell cortex. Its function is as follows. Chaperone that specifically binds and folds nascent G alpha proteins prior to G protein heterotrimer formation, promoting their stability and activity: folds GNAI1, GNAO1, GNA13 and GNAQ. Does not fold G(s) G-alpha proteins GNAS nor GNAL. Also acts as a guanine nucleotide exchange factor (GEF) for G alpha proteins by stimulating exchange of bound GDP for free GTP. Involved in regulation of microtubule pulling forces during mitotic movement of chromosomes by stimulating G(i)-alpha protein (GNAI1), possibly leading to release G(i)-alpha-GTP and NuMA proteins from the NuMA-GPSM2-G(i)-alpha-GDP complex. Also acts as an activator for G(q)-alpha (GNAQ) protein by enhancing the G(q)-coupled receptor-mediated ERK activation. This is Chaperone Ric-8A (RIC8A) from Macaca fascicularis (Crab-eating macaque).